A 445-amino-acid chain; its full sequence is Ktr system potassium uptake protein B (445 aa).

The next 12 membrane-spanning stretches (helical) occupy residues 19–39 (VLAI…MLPI), 46–66 (SWID…LAVV), 79–99 (VIMG…VLIV), 127–147 (IGLV…AALI), 161–181 (GLFA…FSLW), 196–216 (LVIT…FDVM), 230–250 (LMLT…FILE), 286–306 (FGSM…IGAG), 313–333 (GIKL…LRGK), 351–371 (ALAV…ALTI), 377–397 (FLQI…TMGL), and 408–428 (IIIV…FSFA).

Belongs to the TrkH potassium transport family. Ktr (TC 2.A.38.4) subfamily. Homodimer. Part of the KtrAB complex formed by an octameric catalytic ring of KtrA and a membrane associated dimer of KtrB forming a potassium channel.

It localises to the cell membrane. Integral membrane subunit of the KtrAB potassium uptake transporter. The 2 major potassium transporter complexes KtrAB and KtrCD confer resistance to both suddenly imposed and prolonged osmotic stress. The sequence is that of Ktr system potassium uptake protein B (ktrB) from Bacillus subtilis (strain 168).